A 465-amino-acid polypeptide reads, in one-letter code: UDP-N-acetylmuramate--L-alanine ligase (465 aa).

115–121 is an ATP binding site; sequence GAHGKTT.

The protein belongs to the MurCDEF family.

It localises to the cytoplasm. It catalyses the reaction UDP-N-acetyl-alpha-D-muramate + L-alanine + ATP = UDP-N-acetyl-alpha-D-muramoyl-L-alanine + ADP + phosphate + H(+). The protein operates within cell wall biogenesis; peptidoglycan biosynthesis. Cell wall formation. This chain is UDP-N-acetylmuramate--L-alanine ligase, found in Coxiella burnetii (strain Dugway 5J108-111).